The primary structure comprises 871 residues: Transient receptor potential cation channel subfamily V member 4 (871 aa).

Disordered stretches follow at residues 1 to 68 (MADP…PNLR) and 110 to 143 (YGTY…PQPP). Residues 1–469 (MADPGDGPRA…RDKWRKFGAV (469 aa)) lie on the Cytoplasmic side of the membrane. Phosphotyrosine; by SRC-type Tyr-kinases is present on Y110. The span at 116 to 129 (HPSDNKRWRRKVVE) shows a compositional bias: basic and acidic residues. ATP contacts are provided by residues K192, K197, N201, 236–239 (YRGQ), and R248. ANK repeat units lie at residues 237–266 (RGQT…DVHA) and 284–313 (FGEL…KKAD). Residue 249 to 251 (RCK) participates in a 1,2-diacyl-sn-glycero-3-phospho-(1D-myo-inositol-4,5-bisphosphate) binding. Y253 bears the Phosphotyrosine; by LYN mark. A 1,2-diacyl-sn-glycero-3-phospho-(1D-myo-inositol-4,5-bisphosphate)-binding positions include 296 to 299 (NQPH) and K344. One copy of the ANK 3 repeat lies at 369–398 (DGLSPLMMAAKTGKIGVFQHIIRREVTDED). Residues 470–490 (SFYINVVSYLCAMVIFTLTAY) traverse the membrane as a helical segment. Residues 491–507 (YQPLEGTPPYPYRTTVD) are Extracellular-facing. Residues 508–534 (YLRLAGEVITLFTGVLFFFTSIKDLFT) traverse the membrane as a helical segment. Over 535–547 (KKCPGVNSLFVDG) the chain is Cytoplasmic. A helical transmembrane segment spans residues 548-568 (SFQLLYFIYSVLVVVSAALYL). At 569-572 (AGIE) the chain is on the extracellular side. A helical transmembrane segment spans residues 573 to 593 (AYLAVMVFALVLGWMNALYFT). The Cytoplasmic portion of the chain corresponds to 594 to 608 (RGLKLTGTYSIMIQK). Residues 609–636 (ILFKDLFRFLLVYLLFMIGYASALVTLL) form a helical membrane-spanning segment. Residues 637–665 (NPCTNMKVCDEDQSNCTVPTYPACRDSET) lie on the Extracellular side of the membrane. N651 carries an N-linked (GlcNAc...) asparagine glycan. Residues 666–685 (FSAFLLDLFKLTIGMGDLEM) constitute an intramembrane region (pore-forming). Positions 679-682 (GMGD) match the Selectivity filter motif. D682 is a Ca(2+) binding site. Residues 686–693 (LSSAKYPV) are Extracellular-facing. The helical transmembrane segment at 694–722 (VFILLLVTYIILTFVLLLNMLIALMGETV) threads the bilayer. Over 723-871 (GQVSKESKHI…PKWRTDDAPL (149 aa)) the chain is Cytoplasmic. Position 805 is a phosphotyrosine; by SRC-type Tyr-kinases (Y805). The tract at residues 812–831 (HTVGRLRRDRWSSVVPRVVE) is interaction with calmodulin and ITPR3. At S824 the chain carries Phosphoserine; by PKC and PKA. Residues 850–871 (NPNCDGHQQGYAPKWRTDDAPL) are disordered.

The protein belongs to the transient receptor (TC 1.A.4) family. TrpV subfamily. TRPV4 sub-subfamily. In terms of assembly, homotetramer. Interacts with calmodulin. Interacts with CTNNB1. The TRPV4 and CTNNB1 complex can interact with CDH1. Part of a complex containing MLC1, AQP4, HEPACAM and ATP1B1. Interacts with MAP7 and Src family Tyr protein kinases LYN, SRC, FYN, HCK, LCK and YES. Interacts with PACSIN1, PACSIN2 and PACSIN3 (via SH3 domain). Interacts with ITPR3. Interacts with AQP5; the interaction is probably indirect and regulates TRPV4 activation by hypotonicity. Interacts with ANO1. Interacts (via C-terminus) with PKD2 (via C-terminus). Interacts with DDX3X; this interaction is decreased when the channel is activated. In terms of processing, N-glycosylated. As to expression, detected in liver, kidney, heart, brain cortex, cerebellum and brainstem (at protein level). Expressed in salivary glands (at protein level). Expressed in heart, lung, spleen, liver, kidney, brain, skeletal muscle and testis. In the central nervous system, expressed in the lamina terminalis (arched vascular organ and neurons of the subfornical organ), median preoptic area, ventral hippocampal commissure, and ependymal cells of the choroid plexus. In the cochlea, expressed in both inner and outer hair cells, and in marginal cells of the cochlear stria vascularis. Expressed in large neurons of the trigeminal ganglion. In the kidney cortex, strongly expressed by epithelial cells of tubules and much weaker in glomeruli.

Its subcellular location is the cell membrane. It localises to the apical cell membrane. The protein resides in the cell junction. It is found in the adherens junction. The protein localises to the cell projection. Its subcellular location is the cilium. It carries out the reaction Ca(2+)(in) = Ca(2+)(out). In terms of biological role, non-selective calcium permeant cation channel involved in osmotic sensitivity and mechanosensitivity. Activation by exposure to hypotonicity within the physiological range exhibits an outward rectification. Also activated by heat, low pH, citrate and phorbol esters. Increase of intracellular Ca(2+) potentiates currents. Channel activity seems to be regulated by a calmodulin-dependent mechanism with a negative feedback mechanism. Acts as a regulator of intracellular Ca(2+) in synoviocytes. Plays an obligatory role as a molecular component in the nonselective cation channel activation induced by 4-alpha-phorbol 12,13-didecanoate and hypotonic stimulation in synoviocytes and also regulates production of IL-8. Together with PKD2, forms mechano- and thermosensitive channels in cilium. Promotes cell-cell junction formation in skin keratinocytes and plays an important role in the formation and/or maintenance of functional intercellular barriers. Negatively regulates expression of PPARGC1A, UCP1, oxidative metabolism and respiration in adipocytes. Regulates expression of chemokines and cytokines related to pro-inflammatory pathway in adipocytes. Together with AQP5, controls regulatory volume decrease in salivary epithelial cells. Required for normal development and maintenance of bone and cartilage. In its inactive state, may sequester DDX3X at the plasma membrane. When activated, the interaction between both proteins is affected and DDX3X relocalizes to the nucleus. In neurons of the central nervous system, could play a role in triggering voluntary water intake in response to increased sodium concentration in body fluid. This is Transient receptor potential cation channel subfamily V member 4 (Trpv4) from Mus musculus (Mouse).